Consider the following 974-residue polypeptide: Probable proton ATPase 1B (974 aa).

Residues 1–23 (MSSKKYELDAAAFEDKPESHSDA) are compositionally biased toward basic and acidic residues. The disordered stretch occupies residues 1-61 (MSSKKYELDA…ATDLLPPSKG (61 aa)). The next 4 helical transmembrane spans lie at 93-112 (GLWGPMPAALWIAIIIEFAL), 118-137 (GAILFAIQIANATIGWYETI), 265-286 (VMLALCAISFILCMCCFIYLLA), and 295-321 (ALQFAVVVLVVSIPIALEIVVTTTLAV). D351 functions as the 4-aspartylphosphate intermediate in the catalytic mechanism. 6 helical membrane-spanning segments follow: residues 631–651 (AAADMVLTEPGLSVVVEAMLV), 662–684 (FLTYRISATLQLVCFFFIACFSL), 698–712 (FFHLPVLMFMLITLL), 738–761 (VVFVSASILAAVACGSSLMLLWIG), 813–840 (FFFYVPPSPILFCGAIISLLVSTMAASF), and 869–887 (VWIYCIVWWFVQDVVKVLA). Positions 952–974 (REDTHVLNESTSPVNAFSPKVKK) are disordered.

This sequence belongs to the cation transport ATPase (P-type) (TC 3.A.3) family. Type IIIA subfamily.

The protein localises to the membrane. The catalysed reaction is ATP + H2O + H(+)(in) = ADP + phosphate + 2 H(+)(out). The polypeptide is Probable proton ATPase 1B (H1B) (Leishmania donovani).